We begin with the raw amino-acid sequence, 286 residues long: Bifunctional protein FolD (286 aa).

Residues 165-167 (GRS) and Ser190 each bind NADP(+).

The protein belongs to the tetrahydrofolate dehydrogenase/cyclohydrolase family. In terms of assembly, homodimer.

The catalysed reaction is (6R)-5,10-methylene-5,6,7,8-tetrahydrofolate + NADP(+) = (6R)-5,10-methenyltetrahydrofolate + NADPH. It carries out the reaction (6R)-5,10-methenyltetrahydrofolate + H2O = (6R)-10-formyltetrahydrofolate + H(+). It participates in one-carbon metabolism; tetrahydrofolate interconversion. Its function is as follows. Catalyzes the oxidation of 5,10-methylenetetrahydrofolate to 5,10-methenyltetrahydrofolate and then the hydrolysis of 5,10-methenyltetrahydrofolate to 10-formyltetrahydrofolate. The chain is Bifunctional protein FolD from Staphylococcus aureus (strain MRSA252).